Reading from the N-terminus, the 123-residue chain is Putative iron-sulfur cluster insertion protein ErpA (123 aa).

Cys51, Cys115, and Cys117 together coordinate iron-sulfur cluster.

This sequence belongs to the HesB/IscA family. Homodimer. It depends on iron-sulfur cluster as a cofactor.

Required for insertion of 4Fe-4S clusters. This Burkholderia cenocepacia (strain HI2424) protein is Putative iron-sulfur cluster insertion protein ErpA.